We begin with the raw amino-acid sequence, 289 residues long: Inorganic pyrophosphatase (289 aa).

S2 is subject to N-acetylserine. K57 bears the N6-acetyllysine mark. Mg(2+) contacts are provided by D116, D121, and D153. Residue K228 is modified to N6-acetyllysine. Position 250 is a phosphoserine (S250).

Belongs to the PPase family. Homodimer. The cofactor is Mg(2+).

It is found in the cytoplasm. It catalyses the reaction diphosphate + H2O = 2 phosphate + H(+). This Macaca fascicularis (Crab-eating macaque) protein is Inorganic pyrophosphatase (PPA1).